The chain runs to 220 residues: Type IV major pilin protein PilA (220 aa).

A propeptide spans 1–12 (leader sequence); the sequence is MRVSRFNPRNRG. Phe-13 is subject to N-methylphenylalanine. A helical membrane pass occupies residues 13-33; it reads FTLIELMIVVAIIGILAAIAI.

This sequence belongs to the N-Me-Phe pilin family.

The protein localises to the fimbrium. It localises to the membrane. The two-component PilS2/PilR2 is required for proper assembly of T4P and regulation. Its function is as follows. Major component of the type IV pili that are required for social gliding motility through cycles of extension and retraction. Extended pili are composed of thousands of copies of PilA and retract upon binding to extracellular polysaccharides and thereby pull the cell forward. This Myxococcus xanthus (strain DK1622) protein is Type IV major pilin protein PilA (pilA).